The sequence spans 82 residues: Mu-conotoxin MrVIA (82 aa).

The signal sequence occupies residues 1–22 (MKLTCMMIVAVLFLTAWTLVMA). The propeptide occupies 23-49 (DDSNNGLANHFSKSRDEMEDPEASKLE). Cystine bridges form between Cys-53–Cys-71, Cys-60–Cys-76, and Cys-70–Cys-81.

Expressed by the venom duct.

It localises to the secreted. In terms of biological role, muO-conotoxins are gating-modifier toxins that inhibit sodium current by trapping the domain II voltage sensor in the closed position to prevent opening of the sodium channel. This toxin inhibits rNav1.2/SCN2A (IC(50)=532 nM), rNav1.4/SCN4A (IC(50)=438 nM) and rNav1.7/SCN9A (IC(50)=345 nM). It blocks Nav channels by interacting mainly with the C-terminal part of the pore loop of domain-3. It does not bind on site 1. At small concentration, this toxin also acts as a calcium current agonist, whereas at higher doses it blocks fast-inactivating calcium current. The protein is Mu-conotoxin MrVIA of Conus marmoreus (Marble cone).